We begin with the raw amino-acid sequence, 427 residues long: Inward rectifier potassium channel 2 (427 aa).

Residues 1–81 are Cytoplasmic-facing; the sequence is MGSVRTNRYS…IFTTCVDIRW (81 aa). Cys76 carries the post-translational modification S-nitrosocysteine. Residues 82 to 106 form a helical membrane-spanning segment; that stretch reads RWMLVIFCLAFVLSWLFFGCVFWLI. Topologically, residues 107-128 are extracellular; it reads ALLHGDLDASKESKACVSEVNS. Positions 129–140 form an intramembrane region, helical; Pore-forming; it reads FTAAFLFSIETQ. The segment at residues 141–147 is an intramembrane region (pore-forming); that stretch reads TTIGYGF. The Selectivity filter signature appears at 142–147; sequence TIGYGF. At 148–156 the chain is on the extracellular side; sequence RCVTDECPI. A helical membrane pass occupies residues 157–178; that stretch reads AVFMVVFQSIVGCIIDAFIIGA. Topologically, residues 179-427 are cytoplasmic; that stretch reads VMAKMAKPKK…PRPLRRESEI (249 aa). The segment at 181–208 is polyphosphoinositide (PIP2)-binding; it reads AKMAKPKKRNETLVFSHNAVIAMRDGKL. The interval 384–427 is disordered; the sequence is SKEEDDSENGVPESTSTDTPPDIDLHNQASVPLEPRPLRRESEI. The short motif at 425–427 is the PDZ-binding element; the sequence is SEI.

This sequence belongs to the inward rectifier-type potassium channel (TC 1.A.2.1) family. KCNJ2 subfamily. In terms of assembly, homotetramer. Homomultimeric and heteromultimeric association with KCNJ4/Kir2.3. Can form heteromeric channels with Kir2.6/KCNJ18. Associates, via its PDZ-recognition domain, with a complex containing LIN7A, LIN7B, LIN7C, DLG1, CASK and APBA1. S-nitrosylation increases the open probability and inward rectifying currents.

The protein resides in the cell membrane. It localises to the sarcolemma. The protein localises to the T-tubule. It carries out the reaction K(+)(in) = K(+)(out). Activated by phosphatidylinositol 4,5 biphosphate (PtdIns(4,5)P2). Functionally, inward rectifier potassium channels are characterized by a greater tendency to allow potassium to flow into the cell rather than out of it. Their voltage dependence is regulated by the concentration of extracellular potassium; as external potassium is raised, the voltage range of the channel opening shifts to more positive voltages. The inward rectification is mainly due to the blockage of outward current by internal magnesium. Can be blocked by extracellular barium and cesium. Probably participates in establishing action potential waveform and excitability of neuronal and muscle tissues. This Sus scrofa (Pig) protein is Inward rectifier potassium channel 2 (KCNJ2).